The chain runs to 1010 residues: Sodium/potassium-transporting ATPase subunit alpha-3 (1010 aa).

Residues 1 to 21 form a disordered region; sequence MGDKGEKESPKKGKGKRDLDD. Residues 1-74 are Cytoplasmic-facing; sequence MGDKGEKESP…NALTPPPTTP (74 aa). Residues 69-71 form an interaction with phosphoinositide-3 kinase region; the sequence is PPP. A helical membrane pass occupies residues 75-95; sequence EWVKFCRQLFGGFSILLWIGA. Residues 96-118 lie on the Extracellular side of the membrane; it reads ILCFLAYGIQAGTEDEPSNDNLY. A helical transmembrane segment spans residues 119–139; sequence LGIVLAAVVIITGCFSYYQEA. The Cytoplasmic portion of the chain corresponds to 140–275; it reads KSSKIMESFK…VGKTPIAVEI (136 aa). Residues 276 to 295 form a helical membrane-spanning segment; that stretch reads EHFIQLITGVAVFLGISFFV. Over 296 to 307 the chain is Extracellular; it reads LSLILGYTWLEA. A helical membrane pass occupies residues 308–325; it reads VIFLIGIIVANVPEGLLA. Residues 326–759 lie on the Cytoplasmic side of the membrane; the sequence is TVTVCLTLTA…EEGRLIFDNL (434 aa). The 4-aspartylphosphate intermediate role is filled by D363. Mg(2+)-binding residues include D704 and D708. The helical transmembrane segment at 760–779 threads the bilayer; sequence KKSIAYTLTSNIPEITPFLL. The Extracellular segment spans residues 780 to 789; it reads FIMANIPLPL. Residues 790 to 810 traverse the membrane as a helical segment; sequence GTITILCIDLGTDMVPAISLA. Residues 811-830 are Cytoplasmic-facing; it reads YEAAESDIMKRQPRNPRSDK. The chain crosses the membrane as a helical span at residues 831–853; it reads LVNERLISMAYGQIGMIQALGGF. Residues 854-905 lie on the Extracellular side of the membrane; sequence FSYFVILAENGFLPSCLVGIRLSWDDRTINDLEDSYGQQWTYEQRKVVEFTC. The helical transmembrane segment at 906–925 threads the bilayer; the sequence is HTAFFVSIVVVQWADLIICK. Residues 926 to 938 lie on the Cytoplasmic side of the membrane; the sequence is TRRNSVFQQGMKN. Residue S930 is modified to Phosphoserine; by PKA. The chain crosses the membrane as a helical span at residues 939–957; that stretch reads KILIFGLFEETALAAFLSY. Topologically, residues 958 to 972 are extracellular; sequence CPGMDVALRMYPLKP. A helical membrane pass occupies residues 973-993; it reads SWWFCAFPYSFLIFVYDEIRK. At 994–1010 the chain is on the cytoplasmic side; that stretch reads LILRRNPGGWVEKETYY.

It belongs to the cation transport ATPase (P-type) (TC 3.A.3) family. Type IIC subfamily. The sodium/potassium-transporting ATPase is composed of a catalytic alpha subunit, an auxiliary non-catalytic beta subunit and an additional regulatory subunit.

The protein localises to the cell membrane. The catalysed reaction is K(+)(out) + Na(+)(in) + ATP + H2O = K(+)(in) + Na(+)(out) + ADP + phosphate + H(+). In terms of biological role, this is the catalytic component of the active enzyme, which catalyzes the hydrolysis of ATP coupled with the exchange of sodium and potassium ions across the plasma membrane. This action creates the electrochemical gradient of sodium and potassium ions, providing the energy for active transport of various nutrients. In Gallus gallus (Chicken), this protein is Sodium/potassium-transporting ATPase subunit alpha-3 (ATP1A3).